Here is a 334-residue protein sequence, read N- to C-terminus: Phosphate acyltransferase (334 aa).

The protein belongs to the PlsX family. In terms of assembly, homodimer. Probably interacts with PlsY.

It is found in the cytoplasm. It carries out the reaction a fatty acyl-[ACP] + phosphate = an acyl phosphate + holo-[ACP]. Its pathway is lipid metabolism; phospholipid metabolism. Its function is as follows. Catalyzes the reversible formation of acyl-phosphate (acyl-PO(4)) from acyl-[acyl-carrier-protein] (acyl-ACP). This enzyme utilizes acyl-ACP as fatty acyl donor, but not acyl-CoA. The sequence is that of Phosphate acyltransferase from Mycoplasma capricolum subsp. capricolum (strain California kid / ATCC 27343 / NCTC 10154).